The chain runs to 249 residues: Small ribosomal subunit protein eS6 (249 aa).

Lysine 14 is covalently cross-linked (Glycyl lysine isopeptide (Lys-Gly) (interchain with G-Cter in SUMO2)). Position 35 is an ADP-ribosyl glutamic acid (glutamate 35). At arginine 137 the chain carries (3R)-3-hydroxyarginine. Position 148 is a phosphoserine (serine 148). Lysine 211 carries the post-translational modification N6-acetyllysine. Over residues methionine 217–alanine 229 the composition is skewed to basic and acidic residues. Residues methionine 217–lysine 249 form a disordered region. Residues serine 235 and serine 236 each carry the phosphoserine; by RPS6KA1, RPS6KA3, DAPK1 and PASK modification. Residues serine 236–lysine 249 are compositionally biased toward low complexity. A phosphoserine mark is found at serine 240, serine 242, serine 244, and serine 247.

This sequence belongs to the eukaryotic ribosomal protein eS6 family. Component of the small ribosomal subunit. Part of the small subunit (SSU) processome, composed of more than 70 proteins and the RNA chaperone small nucleolar RNA (snoRNA) U3. Post-translationally, ribosomal protein S6 is the major substrate of protein kinases in eukaryote ribosomes. The phosphorylation is stimulated by growth factors, tumor promoting agents, and mitogens. It is dephosphorylated at growth arrest. Phosphorylated at Ser-235 and Ser-236 by RPS6KA1 and RPS6KA3; phosphorylation at these sites facilitates the assembly of the pre-initiation complex. Specifically hydroxylated (with R stereochemistry) at C-3 of Arg-137 by KDM8. In terms of processing, mono-ADP-ribosylation at Glu-35 by PARP16 inhibits polysome assembly and mRNA loading, thereby inhibiting protein translation.

Its subcellular location is the cytoplasm. It is found in the nucleus. It localises to the nucleolus. In terms of biological role, component of the 40S small ribosomal subunit. Plays an important role in controlling cell growth and proliferation through the selective translation of particular classes of mRNA. Part of the small subunit (SSU) processome, first precursor of the small eukaryotic ribosomal subunit. During the assembly of the SSU processome in the nucleolus, many ribosome biogenesis factors, an RNA chaperone and ribosomal proteins associate with the nascent pre-rRNA and work in concert to generate RNA folding, modifications, rearrangements and cleavage as well as targeted degradation of pre-ribosomal RNA by the RNA exosome. The chain is Small ribosomal subunit protein eS6 (RPS6) from Bos taurus (Bovine).